A 117-amino-acid chain; its full sequence is NADH-ubiquinone oxidoreductase chain 3 (117 aa).

3 consecutive transmembrane segments (helical) span residues 4-24 (FLGI…LLGL), 61-81 (LVAI…PWAL), and 86-106 (IGYF…VGFI).

The protein belongs to the complex I subunit 3 family.

Its subcellular location is the mitochondrion membrane. It carries out the reaction a ubiquinone + NADH + 5 H(+)(in) = a ubiquinol + NAD(+) + 4 H(+)(out). Functionally, core subunit of the mitochondrial membrane respiratory chain NADH dehydrogenase (Complex I) that is believed to belong to the minimal assembly required for catalysis. Complex I functions in the transfer of electrons from NADH to the respiratory chain. The immediate electron acceptor for the enzyme is believed to be ubiquinone. This chain is NADH-ubiquinone oxidoreductase chain 3 (NAD3), found in Prototheca wickerhamii.